The following is a 405-amino-acid chain: Protein PAG1 (405 aa).

Positions 1–50 are cleaved as a signal peptide; sequence MVSLIILFRLTFAIANRVRTLMKVLVIVSFFVLTGSASADSGALSLSGAA. N-linked (GlcNAc...) asparagine glycosylation is found at N55, N104, N256, and N351. The GPI-anchor amidated alanine moiety is linked to residue A391. The propeptide at 392–405 is removed in mature form; it reads DSLRRTLALLFLLF.

It localises to the cell membrane. This is Protein PAG1 (PAG1) from Trypanosoma brucei brucei.